The following is a 342-amino-acid chain: N-acetyl-gamma-glutamyl-phosphate reductase (342 aa).

Residue Cys-149 is part of the active site.

This sequence belongs to the NAGSA dehydrogenase family. Type 1 subfamily.

It localises to the cytoplasm. It carries out the reaction N-acetyl-L-glutamate 5-semialdehyde + phosphate + NADP(+) = N-acetyl-L-glutamyl 5-phosphate + NADPH + H(+). Its pathway is amino-acid biosynthesis; L-arginine biosynthesis; N(2)-acetyl-L-ornithine from L-glutamate: step 3/4. Its function is as follows. Catalyzes the NADPH-dependent reduction of N-acetyl-5-glutamyl phosphate to yield N-acetyl-L-glutamate 5-semialdehyde. The chain is N-acetyl-gamma-glutamyl-phosphate reductase from Cereibacter sphaeroides (strain ATCC 17025 / ATH 2.4.3) (Rhodobacter sphaeroides).